The chain runs to 569 residues: Proline--tRNA ligase (569 aa).

It belongs to the class-II aminoacyl-tRNA synthetase family. ProS type 1 subfamily. As to quaternary structure, homodimer.

Its subcellular location is the cytoplasm. It catalyses the reaction tRNA(Pro) + L-proline + ATP = L-prolyl-tRNA(Pro) + AMP + diphosphate. Functionally, catalyzes the attachment of proline to tRNA(Pro) in a two-step reaction: proline is first activated by ATP to form Pro-AMP and then transferred to the acceptor end of tRNA(Pro). As ProRS can inadvertently accommodate and process non-cognate amino acids such as alanine and cysteine, to avoid such errors it has two additional distinct editing activities against alanine. One activity is designated as 'pretransfer' editing and involves the tRNA(Pro)-independent hydrolysis of activated Ala-AMP. The other activity is designated 'posttransfer' editing and involves deacylation of mischarged Ala-tRNA(Pro). The misacylated Cys-tRNA(Pro) is not edited by ProRS. The protein is Proline--tRNA ligase of Halalkalibacterium halodurans (strain ATCC BAA-125 / DSM 18197 / FERM 7344 / JCM 9153 / C-125) (Bacillus halodurans).